The following is a 456-amino-acid chain: Na(+)-translocating NADH-quinone reductase subunit A (456 aa).

This sequence belongs to the NqrA family. Composed of six subunits; NqrA, NqrB, NqrC, NqrD, NqrE and NqrF.

It carries out the reaction a ubiquinone + n Na(+)(in) + NADH + H(+) = a ubiquinol + n Na(+)(out) + NAD(+). Functionally, NQR complex catalyzes the reduction of ubiquinone-1 to ubiquinol by two successive reactions, coupled with the transport of Na(+) ions from the cytoplasm to the periplasm. NqrA to NqrE are probably involved in the second step, the conversion of ubisemiquinone to ubiquinol. In Rhodopirellula baltica (strain DSM 10527 / NCIMB 13988 / SH1), this protein is Na(+)-translocating NADH-quinone reductase subunit A.